The chain runs to 883 residues: Valine--tRNA ligase (883 aa).

A 'HIGH' region motif is present at residues 51 to 61 (PNVTGKLHLGH). Positions 527–531 (KMSKS) match the 'KMSKS' region motif. K530 contributes to the ATP binding site. Residues 811–847 (LEALIDLNVEIARLEKELEKWNKEVARVQGKLNNERF) adopt a coiled-coil conformation.

The protein belongs to the class-I aminoacyl-tRNA synthetase family. ValS type 1 subfamily. As to quaternary structure, monomer.

It localises to the cytoplasm. It carries out the reaction tRNA(Val) + L-valine + ATP = L-valyl-tRNA(Val) + AMP + diphosphate. Catalyzes the attachment of valine to tRNA(Val). As ValRS can inadvertently accommodate and process structurally similar amino acids such as threonine, to avoid such errors, it has a 'posttransfer' editing activity that hydrolyzes mischarged Thr-tRNA(Val) in a tRNA-dependent manner. The protein is Valine--tRNA ligase of Listeria monocytogenes serovar 1/2a (strain ATCC BAA-679 / EGD-e).